The chain runs to 1368 residues: DNA-directed RNA polymerase subunit beta' (1368 aa).

The segment at 1-38 (MTSSSKPARKTSKSKSKASKAAEAPAAPSNELSREAPT) is disordered. Residues 7–18 (PARKTSKSKSKA) show a composition bias toward basic residues. Residues 19 to 29 (SKAAEAPAAPS) are compositionally biased toward low complexity. Zn(2+)-binding residues include Cys-250, Cys-318, Cys-325, and Cys-328. The interval 1340–1368 (AGEELAEEHVPDPGALEGLQEEGLLSQDS) is disordered. Positions 1353–1368 (GALEGLQEEGLLSQDS) are enriched in low complexity.

It belongs to the RNA polymerase beta' chain family. RpoC2 subfamily. In terms of assembly, in cyanobacteria the RNAP catalytic core is composed of 2 alpha, 1 beta, 1 beta', 1 gamma and 1 omega subunit. When a sigma factor is associated with the core the holoenzyme is formed, which can initiate transcription. Zn(2+) serves as cofactor.

It carries out the reaction RNA(n) + a ribonucleoside 5'-triphosphate = RNA(n+1) + diphosphate. In terms of biological role, DNA-dependent RNA polymerase catalyzes the transcription of DNA into RNA using the four ribonucleoside triphosphates as substrates. This Synechococcus sp. (strain RCC307) protein is DNA-directed RNA polymerase subunit beta'.